Consider the following 694-residue polypeptide: Elongation factor G (694 aa).

Positions 8–287 constitute a tr-type G domain; that stretch reads EDYRNFGIMA…AVVEFLPAPT (280 aa). Residues 17–24, 86–90, and 140–143 contribute to the GTP site; these read AHIDAGKT, DTPGH, and NKMD.

Belongs to the TRAFAC class translation factor GTPase superfamily. Classic translation factor GTPase family. EF-G/EF-2 subfamily.

The protein resides in the cytoplasm. Its function is as follows. Catalyzes the GTP-dependent ribosomal translocation step during translation elongation. During this step, the ribosome changes from the pre-translocational (PRE) to the post-translocational (POST) state as the newly formed A-site-bound peptidyl-tRNA and P-site-bound deacylated tRNA move to the P and E sites, respectively. Catalyzes the coordinated movement of the two tRNA molecules, the mRNA and conformational changes in the ribosome. In Brucella anthropi (strain ATCC 49188 / DSM 6882 / CCUG 24695 / JCM 21032 / LMG 3331 / NBRC 15819 / NCTC 12168 / Alc 37) (Ochrobactrum anthropi), this protein is Elongation factor G.